The following is a 292-amino-acid chain: Poly(U)-specific endoribonuclease-B (292 aa).

The EndoU domain maps to 8-285; sequence VNHELSKLFN…IGTAYPALLS (278 aa). Catalysis depends on residues histidine 162, histidine 178, and lysine 224.

This sequence belongs to the ENDOU family. In terms of assembly, monomer. Mn(2+) serves as cofactor.

It localises to the nucleus. The catalysed reaction is uridylyl-uridylyl-ribonucleotide-RNA = a 3'-end uridylyl-2',3'-cyclophospho-uridine-RNA + a 5'-end dephospho-ribonucleoside-RNA. In terms of biological role, poly(U)-specific endoribonuclease involved in the processing of intron-encoded box C/D snoRNAs, such as U16 and U86. Releases products that have 2',3'-cyclic phosphate termini at the 3'-end. The polypeptide is Poly(U)-specific endoribonuclease-B (endou-b) (Xenopus laevis (African clawed frog)).